Reading from the N-terminus, the 140-residue chain is Zinc finger SWIM domain-containing protein 7 (140 aa).

The segment at 76–114 (YTCFTSCHYCPCPAFSFTVLRRNESLMCKHLLAVILSQA) adopts an SWIM-type zinc-finger fold.

Belongs to the SWS1 family.

It localises to the nucleus. In terms of biological role, involved in early stages of the homologous recombination repair (HRR) pathway of double-stranded DNA breaks arising during DNA replication or induced by DNA-damaging agents. The polypeptide is Zinc finger SWIM domain-containing protein 7 (zswim7) (Danio rerio (Zebrafish)).